Consider the following 36-residue polypeptide: Photosystem I reaction center subunit VIII (36 aa).

Residues 9 to 29 (ILVPLVGLVFPAITMVSLFLY) form a helical membrane-spanning segment.

Belongs to the PsaI family.

Its subcellular location is the plastid. The protein localises to the chloroplast thylakoid membrane. May help in the organization of the PsaL subunit. The chain is Photosystem I reaction center subunit VIII from Zygnema circumcarinatum (Green alga).